Here is a 571-residue protein sequence, read N- to C-terminus: Carboxylesterase 3B (571 aa).

Positions 1-31 are cleaved as a signal peptide; the sequence is MTNMRTMIPAGSSVLVWVTCLLLAFVTTVTG. Cysteine 100 and cysteine 127 are oxidised to a cystine. The Acyl-ester intermediate role is filled by serine 232. A disulfide bridge connects residues cysteine 284 and cysteine 295. A glycan (N-linked (GlcNAc...) asparagine) is linked at asparagine 311. Residues glutamate 347 and histidine 460 each act as charge relay system in the active site. The short motif at 568–571 is the Prevents secretion from ER element; it reads PEEL.

Belongs to the type-B carboxylesterase/lipase family.

Its subcellular location is the endoplasmic reticulum lumen. The enzyme catalyses a carboxylic ester + H2O = an alcohol + a carboxylate + H(+). In terms of biological role, involved in the detoxification of xenobiotics and in the activation of ester and amide prodrugs. The chain is Carboxylesterase 3B (Ces3b) from Mus musculus (Mouse).